The chain runs to 231 residues: Flagellar L-ring protein (231 aa).

Residues 1 to 18 (MNRLLSVFALGGAVLLAG) form the signal peptide. The N-palmitoyl cysteine moiety is linked to residue cysteine 19. Cysteine 19 carries the S-diacylglycerol cysteine lipid modification.

The protein belongs to the FlgH family. The basal body constitutes a major portion of the flagellar organelle and consists of four rings (L,P,S, and M) mounted on a central rod.

The protein localises to the cell outer membrane. It localises to the bacterial flagellum basal body. Its function is as follows. Assembles around the rod to form the L-ring and probably protects the motor/basal body from shearing forces during rotation. The chain is Flagellar L-ring protein from Pseudomonas putida (strain ATCC 700007 / DSM 6899 / JCM 31910 / BCRC 17059 / LMG 24140 / F1).